Consider the following 441-residue polypeptide: POC1 centriolar protein homolog A (441 aa).

WD repeat units follow at residues 16 to 55, 58 to 97, 100 to 139, 142 to 181, 184 to 223, 226 to 265, and 268 to 307; these read GHRD…RAYR, GHKD…ESTA, AHTG…FLFS, QHIN…CIQS, EHGG…LIQH, VHSG…LLYT, and GHQG…GSYP. The interval 347–376 is disordered; that stretch reads DLEPHITEMSVKDRSSPLSYTSRSVDQHHP. The span at 348-361 shows a compositional bias: basic and acidic residues; sequence LEPHITEMSVKDRS. Residues 400-427 are a coiled coil; that stretch reads LTRTVGILEQRLSLTEDKLKECIEQQQA.

Belongs to the WD repeat POC1 family. In terms of assembly, interacts with pat.

The protein localises to the cytoplasm. It is found in the cytoskeleton. Its function is as follows. May play an important role in centriole assembly and/or stability and ciliogenesis. The chain is POC1 centriolar protein homolog A (poc1a) from Xenopus laevis (African clawed frog).